The sequence spans 357 residues: Protein FAM118A (357 aa).

Met1 bears the N-acetylmethionine mark. A helical membrane pass occupies residues 30-50; that stretch reads LLLVIGTGVSAAVAPGIPALC. Ser311 is subject to Phosphoserine.

This sequence belongs to the FAM118 family.

The protein resides in the membrane. In Homo sapiens (Human), this protein is Protein FAM118A (FAM118A).